Reading from the N-terminus, the 40-residue chain is Meleagrin (40 aa).

Residue Gln1 is modified to Pyrrolidone carboxylic acid. 3 disulfide bridges follow: Cys6/Cys33, Cys12/Cys28, and Cys16/Cys32.

Belongs to the transferrin family.

The polypeptide is Meleagrin (Meleagris gallopavo (Wild turkey)).